The sequence spans 380 residues: Beta sliding clamp (380 aa).

Belongs to the beta sliding clamp family. In terms of assembly, forms a ring-shaped head-to-tail homodimer around DNA which binds and tethers DNA polymerases and other proteins to the DNA. The DNA replisome complex has a single clamp-loading complex (3 tau and 1 each of delta, delta', psi and chi subunits) which binds 3 Pol III cores (1 core on the leading strand and 2 on the lagging strand) each with a beta sliding clamp dimer. Additional proteins in the replisome are other copies of gamma, psi and chi, Ssb, DNA helicase and RNA primase.

It localises to the cytoplasm. Its function is as follows. Confers DNA tethering and processivity to DNA polymerases and other proteins. Acts as a clamp, forming a ring around DNA (a reaction catalyzed by the clamp-loading complex) which diffuses in an ATP-independent manner freely and bidirectionally along dsDNA. Initially characterized for its ability to contact the catalytic subunit of DNA polymerase III (Pol III), a complex, multichain enzyme responsible for most of the replicative synthesis in bacteria; Pol III exhibits 3'-5' exonuclease proofreading activity. The beta chain is required for initiation of replication as well as for processivity of DNA replication. In Halalkalibacterium halodurans (strain ATCC BAA-125 / DSM 18197 / FERM 7344 / JCM 9153 / C-125) (Bacillus halodurans), this protein is Beta sliding clamp (dnaN).